The chain runs to 221 residues: Thiamine-phosphate synthase (221 aa).

Residues 47–51 and asparagine 79 each bind 4-amino-2-methyl-5-(diphosphooxymethyl)pyrimidine; that span reads QYREK. Positions 80 and 99 each coordinate Mg(2+). Residue threonine 118 coordinates 4-amino-2-methyl-5-(diphosphooxymethyl)pyrimidine. 144 to 146 is a 2-[(2R,5Z)-2-carboxy-4-methylthiazol-5(2H)-ylidene]ethyl phosphate binding site; the sequence is SFT. Lysine 147 contributes to the 4-amino-2-methyl-5-(diphosphooxymethyl)pyrimidine binding site. 2-[(2R,5Z)-2-carboxy-4-methylthiazol-5(2H)-ylidene]ethyl phosphate is bound by residues glycine 175 and 195–196; that span reads VT.

The protein belongs to the thiamine-phosphate synthase family. The cofactor is Mg(2+).

It carries out the reaction 2-[(2R,5Z)-2-carboxy-4-methylthiazol-5(2H)-ylidene]ethyl phosphate + 4-amino-2-methyl-5-(diphosphooxymethyl)pyrimidine + 2 H(+) = thiamine phosphate + CO2 + diphosphate. The enzyme catalyses 2-(2-carboxy-4-methylthiazol-5-yl)ethyl phosphate + 4-amino-2-methyl-5-(diphosphooxymethyl)pyrimidine + 2 H(+) = thiamine phosphate + CO2 + diphosphate. It catalyses the reaction 4-methyl-5-(2-phosphooxyethyl)-thiazole + 4-amino-2-methyl-5-(diphosphooxymethyl)pyrimidine + H(+) = thiamine phosphate + diphosphate. It participates in cofactor biosynthesis; thiamine diphosphate biosynthesis; thiamine phosphate from 4-amino-2-methyl-5-diphosphomethylpyrimidine and 4-methyl-5-(2-phosphoethyl)-thiazole: step 1/1. Condenses 4-methyl-5-(beta-hydroxyethyl)thiazole monophosphate (THZ-P) and 2-methyl-4-amino-5-hydroxymethyl pyrimidine pyrophosphate (HMP-PP) to form thiamine monophosphate (TMP). The chain is Thiamine-phosphate synthase from Caldicellulosiruptor saccharolyticus (strain ATCC 43494 / DSM 8903 / Tp8T 6331).